The chain runs to 282 residues: 4-diphosphocytidyl-2-C-methyl-D-erythritol kinase (282 aa).

The active site involves K9. 98–108 (PMGGGLGGGSS) lines the ATP pocket. The active site involves D140.

Belongs to the GHMP kinase family. IspE subfamily. As to quaternary structure, homodimer.

The catalysed reaction is 4-CDP-2-C-methyl-D-erythritol + ATP = 4-CDP-2-C-methyl-D-erythritol 2-phosphate + ADP + H(+). It functions in the pathway isoprenoid biosynthesis; isopentenyl diphosphate biosynthesis via DXP pathway; isopentenyl diphosphate from 1-deoxy-D-xylulose 5-phosphate: step 3/6. In terms of biological role, catalyzes the phosphorylation of the position 2 hydroxy group of 4-diphosphocytidyl-2C-methyl-D-erythritol. This is 4-diphosphocytidyl-2-C-methyl-D-erythritol kinase from Salmonella paratyphi A (strain ATCC 9150 / SARB42).